The following is a 203-amino-acid chain: MAQALNSTNIAFFRVAFLFTIAFFCLKNVNSILQNTYFIVLTQAMNLPQLTLSRYSGQLGLFALLFTLNGVHDLIPLLENNVKYFQSVVPVRLLIFFILTSISYLWESNFYVHNNSVFIYCFAEVWINFLLYNAIREEKNEEFKRLNQFMVNDEDIEEPQPFTVKTETTEIIEIINDEENDDEDGKDNDDNNEKGNDDSDAKK.

The Cytoplasmic segment spans residues 1-3; that stretch reads MAQ. The chain crosses the membrane as a helical span at residues 4–24; that stretch reads ALNSTNIAFFRVAFLFTIAFF. Topologically, residues 25–58 are lumenal; sequence CLKNVNSILQNTYFIVLTQAMNLPQLTLSRYSGQ. Residues 59 to 79 form a helical membrane-spanning segment; the sequence is LGLFALLFTLNGVHDLIPLLE. Residues 80-92 lie on the Cytoplasmic side of the membrane; it reads NNVKYFQSVVPVR. A helical transmembrane segment spans residues 93–113; sequence LLIFFILTSISYLWESNFYVH. Position 114 (asparagine 114) is a topological domain, lumenal. A helical transmembrane segment spans residues 115 to 135; that stretch reads NSVFIYCFAEVWINFLLYNAI. Residues 136-203 lie on the Cytoplasmic side of the membrane; sequence REEKNEEFKR…KGNDDSDAKK (68 aa). A compositionally biased stretch (acidic residues) spans 175–187; that stretch reads INDEENDDEDGKD. A disordered region spans residues 175 to 203; that stretch reads INDEENDDEDGKDNDDNNEKGNDDSDAKK. Residues 188–203 are compositionally biased toward basic and acidic residues; that stretch reads NDDNNEKGNDDSDAKK.

Belongs to the ILM1 family.

It localises to the endoplasmic reticulum membrane. This chain is Protein ILM1 (ILM1), found in Saccharomyces cerevisiae (strain ATCC 204508 / S288c) (Baker's yeast).